Reading from the N-terminus, the 563-residue chain is Inositol-3-phosphate synthase 1-A (563 aa).

It belongs to the myo-inositol 1-phosphate synthase family. NAD(+) is required as a cofactor.

It is found in the cytoplasm. The catalysed reaction is D-glucose 6-phosphate = 1D-myo-inositol 3-phosphate. It functions in the pathway polyol metabolism; myo-inositol biosynthesis; myo-inositol from D-glucose 6-phosphate: step 1/2. Functionally, key enzyme in myo-inositol biosynthesis pathway that catalyzes the conversion of glucose 6-phosphate to 1-myo-inositol 1-phosphate in a NAD-dependent manner. Rate-limiting enzyme in the synthesis of all inositol-containing compounds. This Xenopus laevis (African clawed frog) protein is Inositol-3-phosphate synthase 1-A (isyna1-a).